The following is a 443-amino-acid chain: Ribulose bisphosphate carboxylase large chain (443 aa).

Residues Asn-89 and Thr-139 each coordinate substrate. Catalysis depends on Lys-141, which acts as the Proton acceptor. Lys-143 provides a ligand contact to substrate. Lys-167, Asp-169, and Glu-170 together coordinate Mg(2+). At Lys-167 the chain carries N6-carboxylysine. Catalysis depends on His-260, which acts as the Proton acceptor. Substrate-binding residues include Arg-261, His-293, and Ser-345.

Belongs to the RuBisCO large chain family. Type I subfamily. In terms of assembly, heterohexadecamer of 8 large chains and 8 small chains; disulfide-linked. The disulfide link is formed within the large subunit homodimers. Mg(2+) serves as cofactor. The disulfide bond which can form in the large chain dimeric partners within the hexadecamer appears to be associated with oxidative stress and protein turnover.

The protein localises to the plastid. The protein resides in the chloroplast. It catalyses the reaction 2 (2R)-3-phosphoglycerate + 2 H(+) = D-ribulose 1,5-bisphosphate + CO2 + H2O. The enzyme catalyses D-ribulose 1,5-bisphosphate + O2 = 2-phosphoglycolate + (2R)-3-phosphoglycerate + 2 H(+). In terms of biological role, ruBisCO catalyzes two reactions: the carboxylation of D-ribulose 1,5-bisphosphate, the primary event in carbon dioxide fixation, as well as the oxidative fragmentation of the pentose substrate in the photorespiration process. Both reactions occur simultaneously and in competition at the same active site. This chain is Ribulose bisphosphate carboxylase large chain, found in Verbena bonariensis (Argentinian vervain).